Reading from the N-terminus, the 201-residue chain is Recombination protein RecR (201 aa).

A C4-type zinc finger spans residues 60–75 (CSCCGNVDTSDPCTIC). The 96-residue stretch at 83–178 (ATLIVVEDVS…RVTRLAHGVP (96 aa)) folds into the Toprim domain.

This sequence belongs to the RecR family.

Its function is as follows. May play a role in DNA repair. It seems to be involved in an RecBC-independent recombinational process of DNA repair. It may act with RecF and RecO. This Brucella melitensis biotype 1 (strain ATCC 23456 / CCUG 17765 / NCTC 10094 / 16M) protein is Recombination protein RecR.